Consider the following 185-residue polypeptide: Endonuclease IV (185 aa).

It carries out the reaction Endonucleolytic cleavage of the 5' phosphodiester bond of deoxycytidine in single-stranded DNA.. Functionally, cleaves single-stranded DNA in a dC-specific manner. The cleavage occurs exclusively at the 5'-proximal position (dC1) within a dCs tract having a minimal size of 6 bases. These specific cleavages may have a detrimental effect on the replication of host dC-containing DNA. This Enterobacteria phage T4 (Bacteriophage T4) protein is Endonuclease IV (denB).